The following is a 376-amino-acid chain: MYLKTLHLRHFRNYYDQKVEFTAAKTILVGNNAQGKSNLLEAVELLATLRSHRMARDRDLVQEEEPLAQINATLERDTGVSDLSLILRRNGRRTVALNGESLRRQMDFLGVLNAVQFSSLDLELVRGSPEVRRNWLDTLLIQLEPVYAHILQQYNQVLRQRNAYLKKLQDSALTTQDSALAIWDAQLVTTGTKVIRRRDRALARLAPLATAWHTSISGSTEVLQISYTPNVQLMQNQPEQVQQAFLSQLQQRAVPEMYRGTTLVGPHRDEVELTINQTPARQYGSQGQQRTLVLALKLAELQLIEEVVKEPPLLLLDDVLAELDPSRQNQLLDTIQDRFQTLITTTHLSSFDAQWLNSSQILFVEQGKISTSNSIR.

30-37 (GNNAQGKS) lines the ATP pocket.

Belongs to the RecF family.

It is found in the cytoplasm. In terms of biological role, the RecF protein is involved in DNA metabolism; it is required for DNA replication and normal SOS inducibility. RecF binds preferentially to single-stranded, linear DNA. It also seems to bind ATP. This Trichormus variabilis (strain ATCC 29413 / PCC 7937) (Anabaena variabilis) protein is DNA replication and repair protein RecF.